We begin with the raw amino-acid sequence, 782 residues long: Fibrinogen alpha chain (782 aa).

An N-terminal signal peptide occupies residues methionine 1–threonine 19. Positions glycine 68 to aspartate 547 form a coiled coil. Positions arginine 264 to serine 283 are enriched in basic and acidic residues. Residues arginine 264–glycine 374 form a disordered region. A Phosphoserine modification is found at serine 279. Residues serine 311–threonine 323 are compositionally biased toward gly residues. Low complexity-rich tracts occupy residues threonine 324 to glycine 344 and glycine 354 to serine 364. At serine 326 the chain carries Phosphoserine. A disulfide bridge connects residues cysteine 404 and cysteine 434. Position 470 is a phosphoserine (serine 470). Proline 499 carries the 4-hydroxyproline; by P4HA1 modification. Over residues aspartate 522–threonine 536 the composition is skewed to basic and acidic residues. The disordered stretch occupies residues aspartate 522–alanine 542. Serine 526 carries the post-translational modification Phosphoserine. The 242-residue stretch at arginine 539–valine 780 folds into the Fibrinogen C-terminal domain. The N-linked (GlcNAc...) asparagine glycan is linked to asparagine 602. The Ca(2+) site is built by aspartate 707, aspartate 709, tryptophan 711, and glutamate 713. Cysteine 715 and cysteine 728 form a disulfide bridge.

As to quaternary structure, heterohexamer; disulfide linked. Contains 2 sets of 3 non-identical chains (alpha, beta and gamma). The 2 heterotrimers are in head to head conformation with the N-termini in a small central domain. In terms of processing, conversion of fibrinogen to fibrin is triggered by thrombin, which cleaves fibrinopeptides A and B from alpha and beta chains, and thus exposes the N-terminal polymerization sites responsible for the formation of the soft clot. The soft clot is converted into the hard clot by factor XIIIA which catalyzes the epsilon-(gamma-glutamyl)lysine cross-linking between gamma chains (stronger) and between alpha chains (weaker) of different monomers. Post-translationally, forms F13A-mediated cross-links between a glutamine and the epsilon-amino group of a lysine residue, forming fibronectin-fibrinogen heteropolymers. Phosphorylated by FAM20C in the extracellular medium.

It is found in the secreted. Cleaved by the protease thrombin to yield monomers which, together with fibrinogen beta (FGB) and fibrinogen gamma (FGG), polymerize to form an insoluble fibrin matrix. Fibrin has a major function in hemostasis as one of the primary components of blood clots. In addition, functions during the early stages of wound repair to stabilize the lesion and guide cell migration during re-epithelialization. Was originally thought to be essential for platelet aggregation, based on in vitro studies using anticoagulated blood. However, subsequent studies have shown that it is not absolutely required for thrombus formation in vivo. Enhances expression of SELP in activated platelets via an ITGB3-dependent pathway. Maternal fibrinogen is essential for successful pregnancy. Fibrin deposition is also associated with infection, where it protects against IFNG-mediated hemorrhage. May also facilitate the immune response via both innate and T-cell mediated pathways. The protein is Fibrinogen alpha chain (Fga) of Rattus norvegicus (Rat).